A 389-amino-acid polypeptide reads, in one-letter code: Glutamate 5-kinase (389 aa).

Lysine 16 contributes to the ATP binding site. Residues serine 56, aspartate 143, and asparagine 155 each contribute to the substrate site. An ATP-binding site is contributed by 175–176; that stretch reads SD. The region spanning 281 to 358 is the PUA domain; it reads AGELHVDEGA…AEIEAILGYA (78 aa).

The protein belongs to the glutamate 5-kinase family.

The protein resides in the cytoplasm. It catalyses the reaction L-glutamate + ATP = L-glutamyl 5-phosphate + ADP. It participates in amino-acid biosynthesis; L-proline biosynthesis; L-glutamate 5-semialdehyde from L-glutamate: step 1/2. In terms of biological role, catalyzes the transfer of a phosphate group to glutamate to form L-glutamate 5-phosphate. The chain is Glutamate 5-kinase from Rhizobium rhizogenes (strain K84 / ATCC BAA-868) (Agrobacterium radiobacter).